The following is a 187-amino-acid chain: Flavin-dependent monooxygenase, reductase subunit HsaB (187 aa).

Residues 32 to 36 (PVGFA), 38 to 39 (QS), 53 to 55 (CPT), 59 to 60 (RS), and 85 to 86 (RF) each bind FAD. 152-155 (FYRG) is an NAD(+) binding site.

This sequence belongs to the non-flavoprotein flavin reductase family. As to quaternary structure, hsaAB monooxygenase consists of an oxygenase component HsaA and a reductase component HsaB.

The enzyme catalyses a reduced flavin + NAD(+) = an oxidized flavin + NADH + 2 H(+). It participates in lipid metabolism; steroid biosynthesis. Functionally, catalyzes the reduction of free flavins (FMN or FAD) by NADH. Subsequently, the reduced flavins diffuse to the HsaA oxygenase subunit. The sequence is that of Flavin-dependent monooxygenase, reductase subunit HsaB (hsaB) from Mycobacterium tuberculosis (strain CDC 1551 / Oshkosh).